Reading from the N-terminus, the 1050-residue chain is NAD-specific glutamate dehydrogenase (1050 aa).

Residues 1–39 form a disordered region; the sequence is MDSPSAPVPAHKLVDRLKDQTPRHPSPQPTHVSYPKVNG. The span at 12-22 shows a compositional bias: basic and acidic residues; the sequence is KLVDRLKDQTP. K594 is an active-site residue.

The protein belongs to the Glu/Leu/Phe/Val dehydrogenases family. As to quaternary structure, homotetramer.

The catalysed reaction is L-glutamate + NAD(+) + H2O = 2-oxoglutarate + NH4(+) + NADH + H(+). This chain is NAD-specific glutamate dehydrogenase (gdh-1), found in Neurospora crassa (strain ATCC 24698 / 74-OR23-1A / CBS 708.71 / DSM 1257 / FGSC 987).